The sequence spans 285 residues: Protease HtpX homolog (285 aa).

The next 2 membrane-spanning stretches (helical) occupy residues 7-27 (TAML…MIGG) and 30-50 (GMTI…WFSD). His-131 serves as a coordination point for Zn(2+). Glu-132 is a catalytic residue. His-135 is a Zn(2+) binding site. The next 2 helical transmembrane spans lie at 146-166 (ITAT…FFGG) and 177-197 (IAGI…QMAI). Glu-202 lines the Zn(2+) pocket.

This sequence belongs to the peptidase M48B family. Zn(2+) is required as a cofactor.

The protein localises to the cell inner membrane. This is Protease HtpX homolog from Burkholderia ambifaria (strain MC40-6).